We begin with the raw amino-acid sequence, 287 residues long: tRNA uridine(34) hydroxylase (287 aa).

Residues 132–226 (QGRPVVMLDT…YFEEVGGAHY (95 aa)) form the Rhodanese domain. Cys-186 functions as the Cysteine persulfide intermediate in the catalytic mechanism.

The protein belongs to the TrhO family.

It carries out the reaction uridine(34) in tRNA + AH2 + O2 = 5-hydroxyuridine(34) in tRNA + A + H2O. Its function is as follows. Catalyzes oxygen-dependent 5-hydroxyuridine (ho5U) modification at position 34 in tRNAs. The polypeptide is tRNA uridine(34) hydroxylase (Paraburkholderia phytofirmans (strain DSM 17436 / LMG 22146 / PsJN) (Burkholderia phytofirmans)).